The sequence spans 252 residues: Phosphoglycolate phosphatase (252 aa).

The active-site Nucleophile is the Asp-13. Asp-13, Asp-15, and Asp-192 together coordinate Mg(2+).

It belongs to the HAD-like hydrolase superfamily. CbbY/CbbZ/Gph/YieH family. In terms of assembly, monomer. It depends on Mg(2+) as a cofactor. Chloride serves as cofactor.

It catalyses the reaction 2-phosphoglycolate + H2O = glycolate + phosphate. It functions in the pathway organic acid metabolism; glycolate biosynthesis; glycolate from 2-phosphoglycolate: step 1/1. Functionally, specifically catalyzes the dephosphorylation of 2-phosphoglycolate. Is involved in the dissimilation of the intracellular 2-phosphoglycolate formed during the DNA repair of 3'-phosphoglycolate ends, a major class of DNA lesions induced by oxidative stress. This is Phosphoglycolate phosphatase from Shigella boydii serotype 4 (strain Sb227).